Reading from the N-terminus, the 267-residue chain is Protein LicA (267 aa).

It belongs to the peptidase S49 family.

Its function is as follows. Mediates phase variation of the LPS epitopes. Phase variation of H.influenza LPS epitopes expressed by LicA is determined by a translational switch. This chain is Protein LicA (licA), found in Haemophilus influenzae (strain ATCC 51907 / DSM 11121 / KW20 / Rd).